The following is a 427-amino-acid chain: Zinc finger protein DPF3 (427 aa).

The segment at 182–244 (LENDENADEV…NDAASQDDHD (63 aa)) is disordered. Acidic residues predominate over residues 184–199 (NDENADEVNEEEDLEE). Over residues 233–244 (RRNDAASQDDHD) the composition is skewed to basic and acidic residues. A C2H2-type zinc finger spans residues 247-270 (YVCDICGKRYKNRPGLSYHYAHTH). Positions 272–301 (ASEEGDEAREQETRSSPVHRNENHKPQKGP) are disordered. Basic and acidic residues predominate over residues 279–296 (AREQETRSSPVHRNENHK). 2 consecutive PHD-type zinc fingers follow at residues 308–368 (NNYC…CKSC) and 365–415 (CKSC…CREL).

It belongs to the requiem/DPF family. In terms of assembly, component of the BAF complex. Interacts with acetylated histones H3 and H4. Component of neuron-specific chromatin remodeling complex (nBAF complex), a subfamily of ATP-dependent SWI/SNF chromatin remodeling complexes. Expressed in the heart and somites.

It is found in the nucleus. Muscle-specific component of the BAF complex, a multiprotein complex involved in transcriptional activation and repression of select genes by chromatin remodeling (alteration of DNA-nucleosome topology). Specifically binds acetylated lysines on histone 3 and 4. In the complex, it acts as a tissue-specific anchor between histone acetylations and methylations and chromatin remodeling. It thereby probably plays an essential role in heart and skeletal muscle development. Belongs to the neuron-specific chromatin remodeling complex (nBAF complex) and plays a role in neural development. The protein is Zinc finger protein DPF3 (DPF3) of Gallus gallus (Chicken).